A 408-amino-acid polypeptide reads, in one-letter code: LL-diaminopimelate aminotransferase (408 aa).

Tyr15 and Gly42 together coordinate substrate. Residues Tyr72, 108–109 (SK), Tyr132, Asn187, Tyr218, and 246–248 (SFS) each bind pyridoxal 5'-phosphate. Substrate contacts are provided by Lys109, Tyr132, and Asn187. At Lys249 the chain carries N6-(pyridoxal phosphate)lysine. Residues Arg257 and Asn292 each coordinate pyridoxal 5'-phosphate. Positions 292 and 388 each coordinate substrate.

Belongs to the class-I pyridoxal-phosphate-dependent aminotransferase family. LL-diaminopimelate aminotransferase subfamily. As to quaternary structure, homodimer. Pyridoxal 5'-phosphate serves as cofactor.

It carries out the reaction (2S,6S)-2,6-diaminopimelate + 2-oxoglutarate = (S)-2,3,4,5-tetrahydrodipicolinate + L-glutamate + H2O + H(+). The protein operates within amino-acid biosynthesis; L-lysine biosynthesis via DAP pathway; LL-2,6-diaminopimelate from (S)-tetrahydrodipicolinate (aminotransferase route): step 1/1. Its function is as follows. Involved in the synthesis of meso-diaminopimelate (m-DAP or DL-DAP), required for both lysine and peptidoglycan biosynthesis. Catalyzes the direct conversion of tetrahydrodipicolinate to LL-diaminopimelate. The polypeptide is LL-diaminopimelate aminotransferase (Leptospira biflexa serovar Patoc (strain Patoc 1 / Ames)).